Reading from the N-terminus, the 194-residue chain is Holliday junction branch migration complex subunit RuvA (194 aa).

The tract at residues 1–63 is domain I; sequence MFEYMKGMIV…EDEAHLYGFV (63 aa). Residues 64–142 form a domain II region; the sequence is DKEELAMFKK…DSQVEYDQNF (79 aa). Residues 143-146 form a flexible linker region; it reads FNHE. The domain III stretch occupies residues 146-194; that stretch reads ENKNNNEVVDALMALGYTKHEGEQAASAVRDTSLSTEEMIRKALNWLAR.

This sequence belongs to the RuvA family. Homotetramer. Forms an RuvA(8)-RuvB(12)-Holliday junction (HJ) complex. HJ DNA is sandwiched between 2 RuvA tetramers; dsDNA enters through RuvA and exits via RuvB. An RuvB hexamer assembles on each DNA strand where it exits the tetramer. Each RuvB hexamer is contacted by two RuvA subunits (via domain III) on 2 adjacent RuvB subunits; this complex drives branch migration. In the full resolvosome a probable DNA-RuvA(4)-RuvB(12)-RuvC(2) complex forms which resolves the HJ.

It localises to the cytoplasm. Its function is as follows. The RuvA-RuvB-RuvC complex processes Holliday junction (HJ) DNA during genetic recombination and DNA repair, while the RuvA-RuvB complex plays an important role in the rescue of blocked DNA replication forks via replication fork reversal (RFR). RuvA specifically binds to HJ cruciform DNA, conferring on it an open structure. The RuvB hexamer acts as an ATP-dependent pump, pulling dsDNA into and through the RuvAB complex. HJ branch migration allows RuvC to scan DNA until it finds its consensus sequence, where it cleaves and resolves the cruciform DNA. This Alkaliphilus metalliredigens (strain QYMF) protein is Holliday junction branch migration complex subunit RuvA.